The sequence spans 413 residues: Protein SLX4IP (413 aa).

Glycyl lysine isopeptide (Lys-Gly) (interchain with G-Cter in SUMO2) cross-links involve residues K61, K79, K167, K176, and K236. Disordered regions lie at residues 172-193 (RTKS…VGRS) and 228-300 (SHQE…GSVE). Residues 238-254 (ENVSQTQPGDTRSQQQL) show a composition bias toward polar residues. Residues K288, K344, and K353 each participate in a glycyl lysine isopeptide (Lys-Gly) (interchain with G-Cter in SUMO2) cross-link. The segment at 363-413 (SSRHLVTNNPGQAQQSDSAAITEQLATDQGGPSKKRKKLQSYNRGCSGKKN) is disordered. Residues 364–389 (SRHLVTNNPGQAQQSDSAAITEQLAT) are compositionally biased toward polar residues. A Phosphothreonine modification is found at T389. K396 is covalently cross-linked (Glycyl lysine isopeptide (Lys-Gly) (interchain with G-Cter in SUMO2)).

The protein belongs to the SLX4IP family. As to quaternary structure, interacts with SLX4/BTBD12; subunit of different structure-specific endonucleases.

The protein is Protein SLX4IP (Slx4ip) of Mus musculus (Mouse).